Reading from the N-terminus, the 556-residue chain is MAVAAAAAAGPVFWRRLLGLLPGRPGLAALLGRLSDRLGRNRDRQRRRSPWLLLAPLLSPAVPQVTSPPCCLCPEGVHRFQWIRNLVPEFGVSSSHVRVLSSPAESFELMKGQIRVAKRRVVMASLYLGTGPLEQELVDCLESTLEKSLQAKFPSNLKVSILLDFTRGSRGRKNSRTMLLPLPQRFPEQVRVSLFHTPHLRGLLRLLIPERFNETIGLQHIKVYLFDNSVILSGANLSDSYFTNRQDRYVFLQDCAEIADFFTELVDAVGDVSLQLQGDDTVQVVDGMVHPYKGDRTEYCKAANKRVMDVINSARTRQQMLHAQTFHSNSLLTQEDAAAAGDRRPAPDTWIYPLIQMKPFEIQIDEIVTETLLTEAERGAKVYLTTGYFNLTQAYMDLVLGTRAEYQILLASPEVNGFFGAKGVVGAIPAAYVHIERQFYSEVCSLGQQERVQLQEYWRRGWTFHAKGLWLYLAGSSLPCLTLIGSPNFGYRSVHRDLEAQIAIVTENEALQQQLHQEQEQLYLRSGVVSSATFEQPSRQVKLWVKMVTPLIKNFF.

A mitochondrion-targeting transit peptide spans 1-28 (MAVAAAAAAGPVFWRRLLGLLPGRPGLA). Serine 49 bears the Phosphoserine mark. 124 to 131 (ASLYLGTG) lines the ATP pocket. 2 PLD phosphodiesterase domains span residues 215–241 (TIGL…SDSY) and 460–493 (RGWT…GYRS). Catalysis depends on residues histidine 220, lysine 222, and aspartate 227.

This sequence belongs to the CDP-alcohol phosphatidyltransferase class-II family.

It is found in the mitochondrion. It catalyses the reaction a CDP-1,2-diacyl-sn-glycerol + sn-glycerol 3-phosphate = a 1,2-diacyl-sn-glycero-3-phospho-(1'-sn-glycero-3'-phosphate) + CMP + H(+). It participates in phospholipid metabolism; phosphatidylglycerol biosynthesis; phosphatidylglycerol from CDP-diacylglycerol: step 1/2. Its activity is regulated as follows. Activated by calcium and magnesium and inhibited by other bivalent cations. Functions in the biosynthesis of the anionic phospholipids phosphatidylglycerol and cardiolipin. The sequence is that of CDP-diacylglycerol--glycerol-3-phosphate 3-phosphatidyltransferase, mitochondrial (PGS1) from Pongo abelii (Sumatran orangutan).